The sequence spans 622 residues: Protein lev-9 (622 aa).

Residues 1–16 form the signal peptide; the sequence is MRFLLLLAISITYASA. Residues 17-61 form the WAP; atypical domain; the sequence is LSCPEVTLSQRPKHCKKECIADEDCKRNKRCMCDGECGLSCVNPI. 19 cysteine pairs are disulfide-bonded: Cys19–Cys49, Cys35–Cys47, Cys41–Cys57, Cys64–Cys105, Cys91–Cys118, Cys124–Cys171, Cys154–Cys188, Cys193–Cys233, Cys219–Cys246, Cys251–Cys291, Cys277–Cys304, Cys309–Cys349, Cys335–Cys362, Cys366–Cys409, Cys395–Cys420, Cys425–Cys467, Cys452–Cys481, Cys486–Cys543, and Cys529–Cys556. Sushi domains lie at 62 to 120, 122 to 190, 191 to 248, 249 to 306, 307 to 364, 365 to 422, 423 to 483, and 484 to 558; these read AMCH…VCRL, LKCG…RCKA, RACP…NCKA, TECS…RCEE, IRCS…RCLA, SCRV…VCSP, LSCH…KCLP, and SWCE…KCVS. Asn411 carries N-linked (GlcNAc...) asparagine glycosylation. A propeptide spanning residues 576–622 is cleaved from the precursor; the sequence is SLPGRAVREYVDDELSTHRQHSGKCGIVSGKLERMIMQHSDNGVSVC.

Post-translationally, proteolytic processing of the C-terminus is required for clustering activity but not for secretion nor traffic.

It is found in the synapse. Its subcellular location is the secreted. Scaffolding protein that is necessary to cluster acetylcholine receptors at neuromuscular junctions. In Caenorhabditis elegans, this protein is Protein lev-9 (lev-9).